The chain runs to 261 residues: Succinate dehydrogenase iron-sulfur subunit (261 aa).

The region spanning 28–119 (RKVQVYRYDP…DIKIYPLPHM (92 aa)) is the 2Fe-2S ferredoxin-type domain. [2Fe-2S] cluster-binding residues include cysteine 80, cysteine 85, and cysteine 100. In terms of domain architecture, 4Fe-4S ferredoxin-type spans 161-191 (DREKLDGLYECILCACCSTSCPSYWWNSDKY). Residues cysteine 171, cysteine 174, and cysteine 177 each coordinate [4Fe-4S] cluster. Cysteine 181 is a [3Fe-4S] cluster binding site. Residue tryptophan 186 participates in a ubiquinone binding. [3Fe-4S] cluster-binding residues include cysteine 228 and cysteine 234. Cysteine 238 contributes to the [4Fe-4S] cluster binding site.

This sequence belongs to the succinate dehydrogenase/fumarate reductase iron-sulfur protein family. In terms of assembly, part of an enzyme complex containing four subunits: a flavoprotein, an iron-sulfur, cytochrome b-556, and a hydrophobic anchor protein. It depends on [2Fe-2S] cluster as a cofactor. Requires [3Fe-4S] cluster as cofactor. [4Fe-4S] cluster serves as cofactor.

The enzyme catalyses a quinone + succinate = fumarate + a quinol. The protein operates within carbohydrate metabolism; tricarboxylic acid cycle; fumarate from succinate (bacterial route): step 1/1. The sequence is that of Succinate dehydrogenase iron-sulfur subunit (sdhB) from Rickettsia typhi (strain ATCC VR-144 / Wilmington).